A 262-amino-acid chain; its full sequence is Ribosomal RNA small subunit methyltransferase A (262 aa).

S-adenosyl-L-methionine contacts are provided by Asn-14, Leu-16, Gly-41, Glu-62, Asp-87, and Asn-109.

It belongs to the class I-like SAM-binding methyltransferase superfamily. rRNA adenine N(6)-methyltransferase family. RsmA subfamily.

The protein resides in the cytoplasm. It carries out the reaction adenosine(1518)/adenosine(1519) in 16S rRNA + 4 S-adenosyl-L-methionine = N(6)-dimethyladenosine(1518)/N(6)-dimethyladenosine(1519) in 16S rRNA + 4 S-adenosyl-L-homocysteine + 4 H(+). Specifically dimethylates two adjacent adenosines (A1518 and A1519) in the loop of a conserved hairpin near the 3'-end of 16S rRNA in the 30S particle. May play a critical role in biogenesis of 30S subunits. The sequence is that of Ribosomal RNA small subunit methyltransferase A from Francisella tularensis subsp. novicida (strain U112).